Consider the following 316-residue polypeptide: 1-aminocyclopropane-1-carboxylate oxidase 4 (316 aa).

The Fe2OG dioxygenase domain occupies 153-253 (PNFGTKVSNY…RMSLASFYNP (101 aa)). The Fe cation site is built by histidine 177, aspartate 179, and histidine 234.

Belongs to the iron/ascorbate-dependent oxidoreductase family. Fe cation serves as cofactor. In terms of tissue distribution, expressed in all of the floral organs examined apart from the sepals.

The enzyme catalyses 1-aminocyclopropane-1-carboxylate + L-ascorbate + O2 = ethene + L-dehydroascorbate + hydrogen cyanide + CO2 + 2 H2O. It functions in the pathway alkene biosynthesis; ethylene biosynthesis via S-adenosyl-L-methionine; ethylene from S-adenosyl-L-methionine: step 2/2. The protein is 1-aminocyclopropane-1-carboxylate oxidase 4 (ACO4) of Solanum lycopersicum (Tomato).